The primary structure comprises 351 residues: Peptide chain release factor 1 (351 aa).

Q230 is modified (N5-methylglutamine).

Belongs to the prokaryotic/mitochondrial release factor family. Post-translationally, methylated by PrmC. Methylation increases the termination efficiency of RF1.

It localises to the cytoplasm. Its function is as follows. Peptide chain release factor 1 directs the termination of translation in response to the peptide chain termination codons UAG and UAA. The chain is Peptide chain release factor 1 from Onion yellows phytoplasma (strain OY-M).